A 189-amino-acid chain; its full sequence is Phomopsin biosynthesis cluster protein C' (189 aa).

The protein belongs to the oryJ family.

In terms of biological role, part of the gene cluster that mediates the biosynthesis of the phomopsins, a group of hexapeptide mycotoxins which infects lupins and causes lupinosis disease in livestock. The role of phomC' within the phomopsins biosynthesis pathway has still to be determined. The pathway starts with the processing of the precursor phomA by several endopeptidases including kexin proteases as well as the cluster-specific S41 family peptidase phomP1 and the oligopeptidase phomG to produce 10 identical copies of the hexapeptide Tyr-Val-Ile-Pro-Ile-Asp. After being excised from the precursor peptide, the core peptides are cyclized and modified post-translationally by enzymes encoded within the gene cluster. The timing and order of proteolysis of the phomA precursor and PTMs are still unknown. Two tyrosinase-like enzymes, phomQ1 and phomQ2, catalyze the chlorination and hydroxylation of Tyr, respectively. PhomYb, is proposed to be involved in the construction of the macrocyclic structure. The other 4 ustYa family proteins may be involved in PTMs that generate the unique structure of phomopsin A. PhomYa is required for the hydroxylation of C-beta of Tyr. PhomYc, phomYd, and phomYe are responsible for the biosynthesis of 2,3-dehydroisoleucine (dIle), 2,3-dehydroaspartic acid (dAsp), and 3,4-dehydroproline (dPro), respectively. While dIle formation by phomYc is indispensable for the installation of dAsp by phomYd, the order of the other PTMs have not been elucidated yet. Most of the biosynthetic enzymes likely have broad substrate specificity, and thus, there might be a metabolic grid from a precursor to phomopsin A. The enzyme(s) responsible for the biosynthesis of 3,4-dehydrovaline (dVal) have also not been identified yet. Finally, phomM acts as an S-adenosylmethionine-dependent alpha-N-methyltransferase that catalyzes two successive N-methylation reactions, converting N-desmethyl-phomopsin A to phomopsin A and phomopsin A further to an N,N-dimethylated congener called phomopsin E. The sequence is that of Phomopsin biosynthesis cluster protein C' from Diaporthe leptostromiformis (Lupinosis disease fungus).